We begin with the raw amino-acid sequence, 527 residues long: MKIQNIIVYVFLIFSCFSCEEFLEEDPRALIAPETFYQSESDVRQAVVGLYSILKNNSIYGQLGLDLFYDNGADIIEPNRSTNVVEPLGNYSLNEAIADVSVQKMSVSDTWKDLYRVIYNANIILDNVDGNDAISEEAQIDIMAEVKFIRALCYWHIVNLWGDAPFYTEPLVLEEIRVLGRTDEDTILSTVVSDLQYAQVHLASVYPEEDRGRASKWAAAIVEAKIHMQEQNWQAGLNKCMEIISQSPHSLLGNYADVFNPNNEYNSEIIWSLDFAKDIRGQFEEGTLGADGSFPSVFGNGNWRPSMFAPRLRDEPKNSSERNALAAALQANGEAFNGTGLQVASKDFAGKFPRNDYRRALNIVDNYLGFDLNFPYMAKIWNLDVDNSPRFNHSDNRIVFRLADVYLMAAECENELNGPANAFQYINKVRERAFATQTEWELKGLDQQGFREAIYDERKWELAGECHRRYDLIRWGILLDVVQDLEYRFWTPNTNIRPYHVKLPIPLQELQVNPVLLESDATNNGYR.

Residues 1-15 (MKIQNIIVYVFLIFS) form the signal peptide. Cys-16 carries the N-palmitoyl cysteine lipid modification. Cys-16 carries the S-diacylglycerol cysteine lipid modification.

The protein belongs to the SusD family.

The protein localises to the cell outer membrane. In terms of biological role, polysaccharide-binding protein probably involved in ulvan degradation. Ulvan is the main polysaccharide component of the Ulvales (green seaweed) cell wall. It is composed of disaccharide building blocks comprising 3-sulfated rhamnose (Rha3S) linked to D-glucuronic acid (GlcA), L-iduronic acid (IduA), or D-xylose (Xyl). The SusD-like protein may mediate ulvan oligomer-binding before transport in the periplasm for further degradation. This chain is SusD-like protein P25, found in Formosa agariphila (strain DSM 15362 / KCTC 12365 / LMG 23005 / KMM 3901 / M-2Alg 35-1).